A 664-amino-acid chain; its full sequence is DNA ligase (664 aa).

NAD(+)-binding positions include 32–36 (DKEYD) and 80–81 (SL). Residue Lys122 is the N6-AMP-lysine intermediate of the active site. NAD(+)-binding residues include Arg144, Glu178, and Lys314. The Zn(2+) site is built by Cys407, Cys410, Cys423, and Cys429. Residues 587–664 (IDENPFMDKT…NEEEFSNKIK (78 aa)) enclose the BRCT domain.

Belongs to the NAD-dependent DNA ligase family. LigA subfamily. Mg(2+) serves as cofactor. It depends on Mn(2+) as a cofactor.

It catalyses the reaction NAD(+) + (deoxyribonucleotide)n-3'-hydroxyl + 5'-phospho-(deoxyribonucleotide)m = (deoxyribonucleotide)n+m + AMP + beta-nicotinamide D-nucleotide.. DNA ligase that catalyzes the formation of phosphodiester linkages between 5'-phosphoryl and 3'-hydroxyl groups in double-stranded DNA using NAD as a coenzyme and as the energy source for the reaction. It is essential for DNA replication and repair of damaged DNA. This is DNA ligase from Clostridium botulinum (strain Loch Maree / Type A3).